The chain runs to 177 residues: Large ribosomal subunit protein uL5 (177 aa).

Belongs to the universal ribosomal protein uL5 family. Part of the 50S ribosomal subunit; part of the 5S rRNA/L5/L18/L25 subcomplex. Contacts the 5S rRNA and the P site tRNA. Forms a bridge to the 30S subunit in the 70S ribosome.

Its function is as follows. This is one of the proteins that bind and probably mediate the attachment of the 5S RNA into the large ribosomal subunit, where it forms part of the central protuberance. In the 70S ribosome it contacts protein S13 of the 30S subunit (bridge B1b), connecting the 2 subunits; this bridge is implicated in subunit movement. Contacts the P site tRNA; the 5S rRNA and some of its associated proteins might help stabilize positioning of ribosome-bound tRNAs. This chain is Large ribosomal subunit protein uL5, found in Neorickettsia sennetsu (strain ATCC VR-367 / Miyayama) (Ehrlichia sennetsu).